Reading from the N-terminus, the 192-residue chain is uncharacterized protein (192 aa).

Positions 17–73 (MLRGSGKKPIQRLAKAPAATASSKTSEWRATTAYGFLPAGGDVRPHSPRYESQGVLS) are disordered. Residues 30-41 (AKAPAATASSKT) are compositionally biased toward low complexity.

This is an uncharacterized protein from Sinorhizobium fredii (strain NBRC 101917 / NGR234).